The primary structure comprises 424 residues: Histidine--tRNA ligase (424 aa).

Belongs to the class-II aminoacyl-tRNA synthetase family. Homodimer.

The protein localises to the cytoplasm. It carries out the reaction tRNA(His) + L-histidine + ATP = L-histidyl-tRNA(His) + AMP + diphosphate + H(+). This chain is Histidine--tRNA ligase, found in Shigella sonnei (strain Ss046).